Reading from the N-terminus, the 251-residue chain is Hydroxyacylglutathione hydrolase (251 aa).

Residues histidine 53, histidine 55, aspartate 57, histidine 58, histidine 110, aspartate 127, and histidine 165 each contribute to the Zn(2+) site.

This sequence belongs to the metallo-beta-lactamase superfamily. Glyoxalase II family. In terms of assembly, monomer. It depends on Zn(2+) as a cofactor.

It catalyses the reaction an S-(2-hydroxyacyl)glutathione + H2O = a 2-hydroxy carboxylate + glutathione + H(+). It functions in the pathway secondary metabolite metabolism; methylglyoxal degradation; (R)-lactate from methylglyoxal: step 2/2. Functionally, thiolesterase that catalyzes the hydrolysis of S-D-lactoyl-glutathione to form glutathione and D-lactic acid. This Blochmanniella pennsylvanica (strain BPEN) protein is Hydroxyacylglutathione hydrolase.